A 209-amino-acid chain; its full sequence is Small ribosomal subunit protein uS3 (209 aa).

The 70-residue stretch at 38-107 folds into the KH type-2 domain; the sequence is IRKFIKNKYY…RVVINIEEIK (70 aa).

This sequence belongs to the universal ribosomal protein uS3 family. As to quaternary structure, part of the 30S ribosomal subunit. Forms a tight complex with proteins S10 and S14.

Binds the lower part of the 30S subunit head. Binds mRNA in the 70S ribosome, positioning it for translation. In Thermotoga sp. (strain RQ2), this protein is Small ribosomal subunit protein uS3.